The chain runs to 342 residues: Putative anthocyanidin reductase (342 aa).

Residues R44, K51, 71 to 72 (EL), 91 to 93 (VAT), Y172, K176, 199 to 202 (PVLV), and S214 each bind NADP(+). K176 acts as the Proton donor in catalysis.

The protein belongs to the NAD(P)-dependent epimerase/dehydratase family. Dihydroflavonol-4-reductase subfamily. As to expression, highly expressed in leaves and weakly in stems. Not expressed in roots.

It participates in secondary metabolite biosynthesis; flavonoid biosynthesis. The chain is Putative anthocyanidin reductase from Ginkgo biloba (Ginkgo).